The primary structure comprises 631 residues: Phosphomethylpyrimidine synthase (631 aa).

Residues N239, M268, Y297, H333, 353–355 (SRG), 394–397 (DGLR), and E433 each bind substrate. Zn(2+) is bound at residue H437. Y460 is a substrate binding site. H501 lines the Zn(2+) pocket. C581, C584, and C589 together coordinate [4Fe-4S] cluster.

It belongs to the ThiC family. Homodimer. [4Fe-4S] cluster serves as cofactor.

It catalyses the reaction 5-amino-1-(5-phospho-beta-D-ribosyl)imidazole + S-adenosyl-L-methionine = 4-amino-2-methyl-5-(phosphooxymethyl)pyrimidine + CO + 5'-deoxyadenosine + formate + L-methionine + 3 H(+). It functions in the pathway cofactor biosynthesis; thiamine diphosphate biosynthesis. Its function is as follows. Catalyzes the synthesis of the hydroxymethylpyrimidine phosphate (HMP-P) moiety of thiamine from aminoimidazole ribotide (AIR) in a radical S-adenosyl-L-methionine (SAM)-dependent reaction. The protein is Phosphomethylpyrimidine synthase of Shigella flexneri serotype 5b (strain 8401).